The sequence spans 217 residues: MRHEQARQAAAQPQGRYVLPNIIEKTSRGEYGMDPYSKLLKERIVFLGVQIDDVSANDVMAQLLFLESEDPDRDISIYINSPGGSFTSLTAIYDTMQFVRPDISTICMGQAASAAAVLLAAGTPGKRFALENSRILIHQPSAQGEGQSSDIEIQAREILRMRSLLERMLAVHTGKKEEDIRKDIERDKIFSADEAKEYGLIDEVIKTRKSSRLATAR.

Serine 113 functions as the Nucleophile in the catalytic mechanism. Residue histidine 138 is part of the active site.

This sequence belongs to the peptidase S14 family. In terms of assembly, fourteen ClpP subunits assemble into 2 heptameric rings which stack back to back to give a disk-like structure with a central cavity, resembling the structure of eukaryotic proteasomes.

Its subcellular location is the cytoplasm. The catalysed reaction is Hydrolysis of proteins to small peptides in the presence of ATP and magnesium. alpha-casein is the usual test substrate. In the absence of ATP, only oligopeptides shorter than five residues are hydrolyzed (such as succinyl-Leu-Tyr-|-NHMec, and Leu-Tyr-Leu-|-Tyr-Trp, in which cleavage of the -Tyr-|-Leu- and -Tyr-|-Trp bonds also occurs).. Its function is as follows. Cleaves peptides in various proteins in a process that requires ATP hydrolysis. Has a chymotrypsin-like activity. Plays a major role in the degradation of misfolded proteins. This Frankia casuarinae (strain DSM 45818 / CECT 9043 / HFP020203 / CcI3) protein is ATP-dependent Clp protease proteolytic subunit 2.